The following is a 295-amino-acid chain: Small ribosomal subunit protein uS2B (295 aa).

Ser-2 is modified (N-acetylserine). Residues 54–113 are interaction with PPP1R16B; sequence TWEKLLLAARAIVAIENPADVSVISSRNTGQRAVLKFAAATGATPIAGRFTPGTFTNQIQ. Laminin-binding regions lie at residues 161 to 180 and 205 to 229; these read IPCN…MLAR and RDPE…EFQG. A compositionally biased stretch (basic and acidic residues) spans 218–227; the sequence is AEKAVTKEEF. A disordered region spans residues 218 to 242; sequence AEKAVTKEEFQGEWTAPSPEFTATQ. 5 [DE]-W-[ST] repeats span residues 230-232, 247-249, 266-268, 275-277, and 293-295; these read EWT and DWS. The tract at residues 242 to 295 is laminin-binding; that stretch reads QPEVADWSEGVQVPSVPIQQFPTEDWSAQPATEDWSAAPTAQATEWVGATTDWS. Positions 266 to 295 are disordered; it reads DWSAQPATEDWSAAPTAQATEWVGATTDWS.

This sequence belongs to the universal ribosomal protein uS2 family. As to quaternary structure, monomer (37LRP) and homodimer (67LR). Component of the small ribosomal subunit. Mature ribosomes consist of a small (40S) and a large (60S) subunit. The 40S subunit contains about 33 different proteins and 1 molecule of RNA (18S). The 60S subunit contains about 49 different proteins and 3 molecules of RNA (28S, 5.8S and 5S). Interacts with RPS21. Interacts with several laminins including at least LAMB1. Interacts with MDK. The mature dimeric form interacts with PPP1R16B (via its fourth ankyrin repeat). Interacts with PPP1CA only in the presence of PPP1R16B. In terms of processing, acylated. Acylation may be a prerequisite for conversion of the monomeric 37 kDa laminin receptor precursor (37LRP) to the mature dimeric 67 kDa laminin receptor (67LR), and may provide a mechanism for membrane association. Post-translationally, cleaved by stromelysin-3 (ST3) at the cell surface. Cleavage by stromelysin-3 may be a mechanism to alter cell-extracellular matrix interactions.

It localises to the cell membrane. It is found in the cytoplasm. The protein localises to the nucleus. Required for the assembly and/or stability of the 40S ribosomal subunit. Required for the processing of the 20S rRNA-precursor to mature 18S rRNA in a late step of the maturation of 40S ribosomal subunits. Also functions as a cell surface receptor for laminin. Plays a role in cell adhesion to the basement membrane and in the consequent activation of signaling transduction pathways. May play a role in cell fate determination and tissue morphogenesis. Also acts as a receptor for several other ligands, including the pathogenic prion protein, viruses, and bacteria. Acts as a PPP1R16B-dependent substrate of PPP1CA. In Homo sapiens (Human), this protein is Small ribosomal subunit protein uS2B.